The primary structure comprises 383 residues: Succinyl-diaminopimelate desuccinylase (383 aa).

Histidine 73 contributes to the Zn(2+) binding site. Residue aspartate 75 is part of the active site. Aspartate 107 contacts Zn(2+). The active-site Proton acceptor is glutamate 141. Residues glutamate 142, glutamate 170, and histidine 356 each coordinate Zn(2+).

Belongs to the peptidase M20A family. DapE subfamily. As to quaternary structure, homodimer. It depends on Zn(2+) as a cofactor. Co(2+) is required as a cofactor.

The catalysed reaction is N-succinyl-(2S,6S)-2,6-diaminopimelate + H2O = (2S,6S)-2,6-diaminopimelate + succinate. It participates in amino-acid biosynthesis; L-lysine biosynthesis via DAP pathway; LL-2,6-diaminopimelate from (S)-tetrahydrodipicolinate (succinylase route): step 3/3. In terms of biological role, catalyzes the hydrolysis of N-succinyl-L,L-diaminopimelic acid (SDAP), forming succinate and LL-2,6-diaminopimelate (DAP), an intermediate involved in the bacterial biosynthesis of lysine and meso-diaminopimelic acid, an essential component of bacterial cell walls. The sequence is that of Succinyl-diaminopimelate desuccinylase from Pseudomonas fluorescens (strain Pf0-1).